A 561-amino-acid chain; its full sequence is MASDIEIAQKATLRRITQVASDKLGIADEHLEPYGHYKAKLSLDYVDSLKDRPNGKLILVTAISPTPAGEGKTTTTVGLGDALNRIGKKTLVCLREPSLGPVFGMKGGAAGGGHAQVVPMEDINLHFTGDFNAIQLANNLLAAMIDNHIHHGNELDIDVRRITWKRVLDMNDRALRDITCSLGGPGNGYPREDGFDIVVASEVMAIFCLATSIQDLKERLGNIVVGYTRQQKPVTARDLKAHGAMTVLLKDALKPNLVQTLENNPAILHGGPFANIAHGCNSVIATQTSLKLADYVVTEAGFGADLGAEKFIDIKCRKSGLRPDAVVLVATIRALKFHGGVDVKELNTENLDALEKGIANIERHVANIREHYGLPCVVSINNFTFDTPAELKLLQDRMAKHEVPVIVARHWAEGGKGAEDVARAVVEIVEKGQSGAAGFKFVYDESLPLMDKITAIATKIYGAAKVNASAKVAGEIKKLQDAGYGHYPVCVAKTQYSFSTNPSARGAPSGHTIDIREVRLAAGAEFIVMICGDVMTMPGLPKVPSAEKIDLGDDGKVVGLF.

Residue 66-73 coordinates ATP; that stretch reads TPAGEGKT.

Belongs to the formate--tetrahydrofolate ligase family.

It catalyses the reaction (6S)-5,6,7,8-tetrahydrofolate + formate + ATP = (6R)-10-formyltetrahydrofolate + ADP + phosphate. It functions in the pathway one-carbon metabolism; tetrahydrofolate interconversion. The sequence is that of Formate--tetrahydrofolate ligase from Methylibium petroleiphilum (strain ATCC BAA-1232 / LMG 22953 / PM1).